The primary structure comprises 715 residues: Polyribonucleotide nucleotidyltransferase (715 aa).

Residues Asp-485 and Asp-491 each coordinate Mg(2+). The KH domain maps to 552–611 (PRIHTMKIDPKKIKDVIGKGGAVIRALTEETGTSIDIDDDGTVKIAATDNNAAKAVMARI). One can recognise an S1 motif domain in the interval 621–689 (NAIYKGKVTR…RQNRIRLTMK (69 aa)). A disordered region spans residues 695 to 715 (TPVAENVTEEAEVSSEQQAEI).

The protein belongs to the polyribonucleotide nucleotidyltransferase family. In terms of assembly, component of the RNA degradosome, which is a multiprotein complex involved in RNA processing and mRNA degradation. The cofactor is Mg(2+).

Its subcellular location is the cytoplasm. The enzyme catalyses RNA(n+1) + phosphate = RNA(n) + a ribonucleoside 5'-diphosphate. Involved in mRNA degradation. Catalyzes the phosphorolysis of single-stranded polyribonucleotides processively in the 3'- to 5'-direction. In Actinobacillus pleuropneumoniae serotype 3 (strain JL03), this protein is Polyribonucleotide nucleotidyltransferase.